Here is a 156-residue protein sequence, read N- to C-terminus: ATP synthase subunit b (156 aa).

The helical transmembrane segment at 5 to 25 threads the bilayer; that stretch reads LTLIVQMLVFAAFVLFTMKLV.

It belongs to the ATPase B chain family. In terms of assembly, F-type ATPases have 2 components, F(1) - the catalytic core - and F(0) - the membrane proton channel. F(1) has five subunits: alpha(3), beta(3), gamma(1), delta(1), epsilon(1). F(0) has three main subunits: a(1), b(2) and c(10-14). The alpha and beta chains form an alternating ring which encloses part of the gamma chain. F(1) is attached to F(0) by a central stalk formed by the gamma and epsilon chains, while a peripheral stalk is formed by the delta and b chains.

Its subcellular location is the cell inner membrane. Functionally, f(1)F(0) ATP synthase produces ATP from ADP in the presence of a proton or sodium gradient. F-type ATPases consist of two structural domains, F(1) containing the extramembraneous catalytic core and F(0) containing the membrane proton channel, linked together by a central stalk and a peripheral stalk. During catalysis, ATP synthesis in the catalytic domain of F(1) is coupled via a rotary mechanism of the central stalk subunits to proton translocation. Component of the F(0) channel, it forms part of the peripheral stalk, linking F(1) to F(0). The protein is ATP synthase subunit b of Legionella pneumophila (strain Paris).